A 553-amino-acid chain; its full sequence is CTP synthase (553 aa).

An amidoligase domain region spans residues 1–270 (MTKYVFVTGG…DDLICRELEL (270 aa)). A CTP-binding site is contributed by serine 13. Serine 13 lines the UTP pocket. ATP is bound by residues 14-19 (SLGKGI) and aspartate 71. 2 residues coordinate Mg(2+): aspartate 71 and glutamate 144. CTP is bound by residues 151 to 153 (DIE), 191 to 196 (KTKPTQ), and lysine 227. Residues 191–196 (KTKPTQ) and lysine 227 contribute to the UTP site. The Glutamine amidotransferase type-1 domain maps to 295 to 547 (TIGMVGKYVE…IKAALIHQDA (253 aa)). Glycine 356 is an L-glutamine binding site. Cysteine 383 (nucleophile; for glutamine hydrolysis) is an active-site residue. L-glutamine contacts are provided by residues 384–387 (LGMQ), glutamate 407, and arginine 473. Active-site residues include histidine 520 and glutamate 522.

Belongs to the CTP synthase family. Homotetramer.

The catalysed reaction is UTP + L-glutamine + ATP + H2O = CTP + L-glutamate + ADP + phosphate + 2 H(+). The enzyme catalyses L-glutamine + H2O = L-glutamate + NH4(+). It carries out the reaction UTP + NH4(+) + ATP = CTP + ADP + phosphate + 2 H(+). It functions in the pathway pyrimidine metabolism; CTP biosynthesis via de novo pathway; CTP from UDP: step 2/2. Allosterically activated by GTP, when glutamine is the substrate; GTP has no effect on the reaction when ammonia is the substrate. The allosteric effector GTP functions by stabilizing the protein conformation that binds the tetrahedral intermediate(s) formed during glutamine hydrolysis. Inhibited by the product CTP, via allosteric rather than competitive inhibition. Catalyzes the ATP-dependent amination of UTP to CTP with either L-glutamine or ammonia as the source of nitrogen. Regulates intracellular CTP levels through interactions with the four ribonucleotide triphosphates. This is CTP synthase from Polynucleobacter asymbioticus (strain DSM 18221 / CIP 109841 / QLW-P1DMWA-1) (Polynucleobacter necessarius subsp. asymbioticus).